The sequence spans 505 residues: 2,3-bisphosphoglycerate-independent phosphoglycerate mutase (505 aa).

Mn(2+) is bound by residues D12 and S62. Catalysis depends on S62, which acts as the Phosphoserine intermediate. Residues H123, 153–154 (RD), R185, R191, 257–260 (RPDR), and K330 contribute to the substrate site. D397, H401, D438, H439, and H456 together coordinate Mn(2+).

It belongs to the BPG-independent phosphoglycerate mutase family. In terms of assembly, monomer. The cofactor is Mn(2+).

It carries out the reaction (2R)-2-phosphoglycerate = (2R)-3-phosphoglycerate. The protein operates within carbohydrate degradation; glycolysis; pyruvate from D-glyceraldehyde 3-phosphate: step 3/5. Its function is as follows. Catalyzes the interconversion of 2-phosphoglycerate and 3-phosphoglycerate. The polypeptide is 2,3-bisphosphoglycerate-independent phosphoglycerate mutase (Staphylococcus haemolyticus (strain JCSC1435)).